We begin with the raw amino-acid sequence, 472 residues long: Exodeoxyribonuclease 7 large subunit (472 aa).

This sequence belongs to the XseA family. As to quaternary structure, heterooligomer composed of large and small subunits.

It is found in the cytoplasm. It carries out the reaction Exonucleolytic cleavage in either 5'- to 3'- or 3'- to 5'-direction to yield nucleoside 5'-phosphates.. In terms of biological role, bidirectionally degrades single-stranded DNA into large acid-insoluble oligonucleotides, which are then degraded further into small acid-soluble oligonucleotides. The chain is Exodeoxyribonuclease 7 large subunit from Carboxydothermus hydrogenoformans (strain ATCC BAA-161 / DSM 6008 / Z-2901).